The primary structure comprises 105 residues: UPF0145 protein Ping_0381 (105 aa).

This sequence belongs to the UPF0145 family.

The polypeptide is UPF0145 protein Ping_0381 (Psychromonas ingrahamii (strain DSM 17664 / CCUG 51855 / 37)).